A 112-amino-acid chain; its full sequence is UPF0145 protein Acid_4599 (112 aa).

It belongs to the UPF0145 family.

In Solibacter usitatus (strain Ellin6076), this protein is UPF0145 protein Acid_4599.